Here is a 170-residue protein sequence, read N- to C-terminus: Anaphase-promoting complex subunit SWM1 (170 aa).

Composition is skewed to basic and acidic residues over residues 48–67 and 132–141; these read NTRT…RNSN and GANEPRKETI. Disordered regions lie at residues 48–81 and 122–141; these read NTRT…MTSE and LNGG…KETI.

Belongs to the APC13 family. As to quaternary structure, the APC/C is composed of at least 13 subunits that stay tightly associated throughout the cell cycle: APC1, APC2, APC4, APC5, APC9, APC11, CDC16, CDC23, CDC26, CDC27, DOC1, MND2 and SWM1. SWM1 interacts directly with CDC23 and APC5, and is required to tether APC9, CDC16, CDC26 and CDC27 to the complex.

Its pathway is protein modification; protein ubiquitination. Component of the anaphase promoting complex/cyclosome (APC/C), a cell cycle-regulated E3 ubiquitin-protein ligase complex that controls progression through mitosis and the G1 phase of the cell cycle. The APC/C is thought to confer substrate specificity and, in the presence of ubiquitin-conjugating E2 enzymes, it catalyzes the formation of protein-ubiquitin conjugates that are subsequently degraded by the 26S proteasome. In early mitosis, the APC/C is activated by CDC20 and targets securin PDS1, the B-type cyclin CLB5, and other anaphase inhibitory proteins for proteolysis, thereby triggering the separation of sister chromatids at the metaphase-to-anaphase transition. In late mitosis and in G1, degradation of CLB5 allows activation of the APC/C by CDH1, which is needed to destroy CDC20 and the B-type cyclin CLB2 to allow exit from mitosis and creating the low CDK state necessary for cytokinesis and for reforming prereplicative complexes in G1 prior to another round of replication. SWM1 is required for APC/C activity in meiosis. This is Anaphase-promoting complex subunit SWM1 (SWM1) from Saccharomyces cerevisiae (strain ATCC 204508 / S288c) (Baker's yeast).